Reading from the N-terminus, the 209-residue chain is Imidazole glycerol phosphate synthase subunit HisH (209 aa).

A Glutamine amidotransferase type-1 domain is found at 1–205; it reads MIAIIDYGMG…QGVVEAWKSS (205 aa). Cysteine 79 (nucleophile) is an active-site residue. Residues histidine 180 and glutamate 182 contribute to the active site.

In terms of assembly, heterodimer of HisH and HisF.

The protein localises to the cytoplasm. The enzyme catalyses 5-[(5-phospho-1-deoxy-D-ribulos-1-ylimino)methylamino]-1-(5-phospho-beta-D-ribosyl)imidazole-4-carboxamide + L-glutamine = D-erythro-1-(imidazol-4-yl)glycerol 3-phosphate + 5-amino-1-(5-phospho-beta-D-ribosyl)imidazole-4-carboxamide + L-glutamate + H(+). The catalysed reaction is L-glutamine + H2O = L-glutamate + NH4(+). It participates in amino-acid biosynthesis; L-histidine biosynthesis; L-histidine from 5-phospho-alpha-D-ribose 1-diphosphate: step 5/9. Functionally, IGPS catalyzes the conversion of PRFAR and glutamine to IGP, AICAR and glutamate. The HisH subunit catalyzes the hydrolysis of glutamine to glutamate and ammonia as part of the synthesis of IGP and AICAR. The resulting ammonia molecule is channeled to the active site of HisF. The chain is Imidazole glycerol phosphate synthase subunit HisH from Bacillus cereus (strain B4264).